A 398-amino-acid chain; its full sequence is Acetate kinase (398 aa).

Residue asparagine 7 participates in Mg(2+) binding. Lysine 14 is an ATP binding site. Arginine 91 provides a ligand contact to substrate. Aspartate 148 acts as the Proton donor/acceptor in catalysis. Residues histidine 208–glycine 212, aspartate 283–arginine 285, and glycine 331–histidine 335 contribute to the ATP site. Residue glutamate 386 participates in Mg(2+) binding.

This sequence belongs to the acetokinase family. Homodimer. Mg(2+) serves as cofactor. The cofactor is Mn(2+).

The protein resides in the cytoplasm. It catalyses the reaction acetate + ATP = acetyl phosphate + ADP. It functions in the pathway metabolic intermediate biosynthesis; acetyl-CoA biosynthesis; acetyl-CoA from acetate: step 1/2. Functionally, catalyzes the formation of acetyl phosphate from acetate and ATP. Can also catalyze the reverse reaction. The protein is Acetate kinase of Clostridium botulinum (strain Alaska E43 / Type E3).